Consider the following 320-residue polypeptide: Replication factor C small subunit 2 (320 aa).

44-51 (GPPGTGKT) contacts ATP.

Belongs to the activator 1 small subunits family. RfcS subfamily. Heteromultimer composed of small subunits (RfcS) and large subunits (RfcL).

Its function is as follows. Part of the RFC clamp loader complex which loads the PCNA sliding clamp onto DNA. The polypeptide is Replication factor C small subunit 2 (Pyrobaculum islandicum (strain DSM 4184 / JCM 9189 / GEO3)).